The sequence spans 218 residues: Large ribosomal subunit protein bL25 (218 aa).

It belongs to the bacterial ribosomal protein bL25 family. CTC subfamily. Part of the 50S ribosomal subunit; part of the 5S rRNA/L5/L18/L25 subcomplex. Contacts the 5S rRNA. Binds to the 5S rRNA independently of L5 and L18.

Functionally, this is one of the proteins that binds to the 5S RNA in the ribosome where it forms part of the central protuberance. This is Large ribosomal subunit protein bL25 from Polaromonas naphthalenivorans (strain CJ2).